The primary structure comprises 556 residues: Formate--tetrahydrofolate ligase (556 aa).

Position 65-72 (65-72 (TPAGEGKS)) interacts with ATP.

The protein belongs to the formate--tetrahydrofolate ligase family.

The enzyme catalyses (6S)-5,6,7,8-tetrahydrofolate + formate + ATP = (6R)-10-formyltetrahydrofolate + ADP + phosphate. The protein operates within one-carbon metabolism; tetrahydrofolate interconversion. The polypeptide is Formate--tetrahydrofolate ligase (Streptococcus agalactiae serotype Ia (strain ATCC 27591 / A909 / CDC SS700)).